Reading from the N-terminus, the 503-residue chain is ATP synthase subunit alpha (503 aa).

170–177 (GDRQTGKT) is a binding site for ATP.

Belongs to the ATPase alpha/beta chains family. In terms of assembly, F-type ATPases have 2 components, CF(1) - the catalytic core - and CF(0) - the membrane proton channel. CF(1) has five subunits: alpha(3), beta(3), gamma(1), delta(1), epsilon(1). CF(0) has three main subunits: a(1), b(2) and c(9-12). The alpha and beta chains form an alternating ring which encloses part of the gamma chain. CF(1) is attached to CF(0) by a central stalk formed by the gamma and epsilon chains, while a peripheral stalk is formed by the delta and b chains.

It is found in the cell inner membrane. It carries out the reaction ATP + H2O + 4 H(+)(in) = ADP + phosphate + 5 H(+)(out). Its function is as follows. Produces ATP from ADP in the presence of a proton gradient across the membrane. The alpha chain is a regulatory subunit. The chain is ATP synthase subunit alpha from Geobacter sulfurreducens (strain ATCC 51573 / DSM 12127 / PCA).